Here is a 433-residue protein sequence, read N- to C-terminus: Signal recognition particle 54 kDa protein (433 aa).

Residues 106–113, 186–190, and 244–247 contribute to the GTP site; these read GVEGSGKT, DTAGR, and TKMD.

It belongs to the GTP-binding SRP family. SRP54 subfamily. Part of the signal recognition particle protein translocation system, which is composed of SRP and FtsY. Archaeal SRP consists of a 7S RNA molecule of 300 nucleotides and two protein subunits: SRP54 and SRP19.

The protein resides in the cytoplasm. It carries out the reaction GTP + H2O = GDP + phosphate + H(+). In terms of biological role, involved in targeting and insertion of nascent membrane proteins into the cytoplasmic membrane. Binds to the hydrophobic signal sequence of the ribosome-nascent chain (RNC) as it emerges from the ribosomes. The SRP-RNC complex is then targeted to the cytoplasmic membrane where it interacts with the SRP receptor FtsY. The chain is Signal recognition particle 54 kDa protein from Pyrobaculum islandicum (strain DSM 4184 / JCM 9189 / GEO3).